A 434-amino-acid polypeptide reads, in one-letter code: Enolase (434 aa).

A (2R)-2-phosphoglycerate-binding site is contributed by Gln165. Glu207 functions as the Proton donor in the catalytic mechanism. The Mg(2+) site is built by Asp244, Glu291, and Asp318. 4 residues coordinate (2R)-2-phosphoglycerate: Lys343, Arg372, Ser373, and Lys394. Lys343 serves as the catalytic Proton acceptor.

Belongs to the enolase family. It depends on Mg(2+) as a cofactor.

It is found in the cytoplasm. The protein resides in the secreted. The protein localises to the cell surface. It carries out the reaction (2R)-2-phosphoglycerate = phosphoenolpyruvate + H2O. It functions in the pathway carbohydrate degradation; glycolysis; pyruvate from D-glyceraldehyde 3-phosphate: step 4/5. In terms of biological role, catalyzes the reversible conversion of 2-phosphoglycerate (2-PG) into phosphoenolpyruvate (PEP). It is essential for the degradation of carbohydrates via glycolysis. The protein is Enolase of Staphylococcus haemolyticus (strain JCSC1435).